We begin with the raw amino-acid sequence, 113 residues long: Nucleoid-associated protein Athe_1143 (113 aa).

This sequence belongs to the YbaB/EbfC family. As to quaternary structure, homodimer.

It localises to the cytoplasm. The protein resides in the nucleoid. Its function is as follows. Binds to DNA and alters its conformation. May be involved in regulation of gene expression, nucleoid organization and DNA protection. The chain is Nucleoid-associated protein Athe_1143 from Caldicellulosiruptor bescii (strain ATCC BAA-1888 / DSM 6725 / KCTC 15123 / Z-1320) (Anaerocellum thermophilum).